We begin with the raw amino-acid sequence, 481 residues long: Tetratricopeptide repeat protein 29 (481 aa).

Residues 1–18 show a composition bias toward low complexity; the sequence is MASVGPVKTKTVTLKELT. Positions 1–53 are disordered; that stretch reads MASVGPVKTKTVTLKELTPPIPSPEKSACKGAKPDSNHMALVPVKPSQPGSGK. TPR repeat units follow at residues 191–224, 231–264, 271–310, 317–350, 357–390, and 397–430; these read CERC…AMES, QEVR…AMAL, VEAN…SQRV, ADSL…ARAA, KRAS…SEKA, and YRAT…ARKL.

In terms of assembly, interacts with TAX-1.

Its subcellular location is the cytoplasm. It localises to the cytoskeleton. It is found in the flagellum axoneme. Axonemal protein which is implicated in axonemal and/or peri-axonemal structure assembly and regulates flagellum assembly and beating. The polypeptide is Tetratricopeptide repeat protein 29 (Trypanosoma brucei brucei (strain 927/4 GUTat10.1)).